Consider the following 116-residue polypeptide: Large ribosomal subunit protein bL19 (116 aa).

The protein belongs to the bacterial ribosomal protein bL19 family.

In terms of biological role, this protein is located at the 30S-50S ribosomal subunit interface and may play a role in the structure and function of the aminoacyl-tRNA binding site. This chain is Large ribosomal subunit protein bL19, found in Lactobacillus gasseri (strain ATCC 33323 / DSM 20243 / BCRC 14619 / CIP 102991 / JCM 1131 / KCTC 3163 / NCIMB 11718 / NCTC 13722 / AM63).